A 388-amino-acid polypeptide reads, in one-letter code: Chaperone protein DnaJ (388 aa).

The J domain maps to 4-69; it reads DYYDILGVDE…EKRQRYDQFG (66 aa). Basic and acidic residues-rich tracts occupy residues 27–50, 58–73, and 113–124; these read KAME…KEAS, DPEK…HDGV, and GRSERGRGRPGS. Disordered regions lie at residues 27 to 86 and 99 to 125; these read KAME…GRGR and SDIF…PGSD. The CR-type zinc finger occupies 140 to 225; that stretch reads GTEKNLRLQK…CGGEGRVQGE (86 aa). Zn(2+)-binding residues include Cys153, Cys156, Cys173, Cys176, Cys199, Cys202, Cys213, and Cys216. CXXCXGXG motif repeat units lie at residues 153–160, 173–180, 199–206, and 213–220; these read CESCDGTG, CPKCDGTG, CPRCEGEG, and CDDCGGEG. Residues 362 to 376 are compositionally biased toward basic and acidic residues; sequence AHDNFQPRPPEEDTQ. The disordered stretch occupies residues 362–388; sequence AHDNFQPRPPEEDTQKSFFRRVSDVFS.

Belongs to the DnaJ family. As to quaternary structure, homodimer. The cofactor is Zn(2+).

Its subcellular location is the cytoplasm. Its function is as follows. Participates actively in the response to hyperosmotic and heat shock by preventing the aggregation of stress-denatured proteins and by disaggregating proteins, also in an autonomous, DnaK-independent fashion. Unfolded proteins bind initially to DnaJ; upon interaction with the DnaJ-bound protein, DnaK hydrolyzes its bound ATP, resulting in the formation of a stable complex. GrpE releases ADP from DnaK; ATP binding to DnaK triggers the release of the substrate protein, thus completing the reaction cycle. Several rounds of ATP-dependent interactions between DnaJ, DnaK and GrpE are required for fully efficient folding. Also involved, together with DnaK and GrpE, in the DNA replication of plasmids through activation of initiation proteins. This is Chaperone protein DnaJ from Salinibacter ruber (strain DSM 13855 / M31).